The primary structure comprises 655 residues: p-hydroxybenzoic acid efflux pump subunit AaeB (655 aa).

A run of 11 helical transmembrane segments spans residues 13–33 (FAVKLACAIVLALFIGFHFQL), 38–58 (WAVLTAAIVAAGPAFAAGGEP), 69–89 (LRIIGTFIGCIAALIIIISMI), 93–113 (LLMILVCCVWAGFCTWISSLV), 121–141 (WGLSGYTALIIVITIQTEPLL), 152–172 (EIVIGIGCAILADLLFSPRSI), 370–390 (LFWLWTGWTSGNGAMVMIAVV), 407–427 (FIYGTLAALPLGLLYFLVIIP), 431–451 (QSMLLLCLSLAVLGFFIGIEV), 459–479 (MGALASTINIIVLDNPMTFHF), and 482–502 (FLDSALGQIVGCMLAFIVILL).

This sequence belongs to the aromatic acid exporter ArAE (TC 2.A.85) family.

It is found in the cell inner membrane. Its function is as follows. Forms an efflux pump with AaeA. Could function as a metabolic relief valve, allowing to eliminate certain compounds when they accumulate to high levels in the cell. The protein is p-hydroxybenzoic acid efflux pump subunit AaeB of Salmonella dublin (strain CT_02021853).